We begin with the raw amino-acid sequence, 417 residues long: Serine--tRNA ligase (417 aa).

Residue 226-228 coordinates L-serine; it reads TSE. ATP contacts are provided by residues 257–259 and Val-273; that span reads RRE. An L-serine-binding site is contributed by Glu-280. 344 to 347 lines the ATP pocket; the sequence is ELTS. Position 379 (Thr-379) interacts with L-serine.

This sequence belongs to the class-II aminoacyl-tRNA synthetase family. Type-1 seryl-tRNA synthetase subfamily. As to quaternary structure, homodimer. The tRNA molecule binds across the dimer.

The protein localises to the cytoplasm. It carries out the reaction tRNA(Ser) + L-serine + ATP = L-seryl-tRNA(Ser) + AMP + diphosphate + H(+). The enzyme catalyses tRNA(Sec) + L-serine + ATP = L-seryl-tRNA(Sec) + AMP + diphosphate + H(+). The protein operates within aminoacyl-tRNA biosynthesis; selenocysteinyl-tRNA(Sec) biosynthesis; L-seryl-tRNA(Sec) from L-serine and tRNA(Sec): step 1/1. In terms of biological role, catalyzes the attachment of serine to tRNA(Ser). Is also able to aminoacylate tRNA(Sec) with serine, to form the misacylated tRNA L-seryl-tRNA(Sec), which will be further converted into selenocysteinyl-tRNA(Sec). The polypeptide is Serine--tRNA ligase (Mycobacterium sp. (strain KMS)).